Here is an 88-residue protein sequence, read N- to C-terminus: Conotoxin MaIr34 (88 aa).

The signal sequence occupies residues 1–21; that stretch reads MKLTCVIVAVLFLTAWTFVMA. A propeptide spanning residues 22–53 is cleaved from the precursor; that stretch reads DDPRDGPDTAVRGGKRFWKARNEMNSAASKLN. Disulfide bonds link Cys57-Cys75, Cys64-Cys79, and Cys74-Cys83.

Belongs to the conotoxin O1 superfamily. Expressed by the venom duct.

The protein resides in the secreted. The protein is Conotoxin MaIr34 of Conus marmoreus (Marble cone).